Reading from the N-terminus, the 448-residue chain is Tubulin alpha chain (448 aa).

GTP-binding residues include Gln-12, Glu-73, Ser-142, Gly-146, Thr-147, Thr-181, Asn-208, and Asn-230. Residue Glu-73 coordinates Mg(2+). The active site involves Glu-256.

Belongs to the tubulin family. In terms of assembly, dimer of alpha and beta chains. A typical microtubule is a hollow water-filled tube with an outer diameter of 25 nm and an inner diameter of 15 nM. Alpha-beta heterodimers associate head-to-tail to form protofilaments running lengthwise along the microtubule wall with the beta-tubulin subunit facing the microtubule plus end conferring a structural polarity. Microtubules usually have 13 protofilaments but different protofilament numbers can be found in some organisms and specialized cells. Requires Mg(2+) as cofactor.

Its subcellular location is the cytoplasm. The protein resides in the cytoskeleton. It carries out the reaction GTP + H2O = GDP + phosphate + H(+). In terms of biological role, tubulin is the major constituent of microtubules, a cylinder consisting of laterally associated linear protofilaments composed of alpha- and beta-tubulin heterodimers. Microtubules grow by the addition of GTP-tubulin dimers to the microtubule end, where a stabilizing cap forms. Below the cap, tubulin dimers are in GDP-bound state, owing to GTPase activity of alpha-tubulin. This is Tubulin alpha chain (TUB1) from Eremothecium gossypii (strain ATCC 10895 / CBS 109.51 / FGSC 9923 / NRRL Y-1056) (Yeast).